The sequence spans 43 residues: Photosystem I reaction center subunit IX (43 aa).

The helical transmembrane segment at 7–27 (YLSTAPVLATFWFGLLAGLLI) threads the bilayer.

It belongs to the PsaJ family.

The protein resides in the plastid. Its subcellular location is the chloroplast thylakoid membrane. Its function is as follows. May help in the organization of the PsaE and PsaF subunits. The polypeptide is Photosystem I reaction center subunit IX (Gnetum parvifolium (Small-leaved jointfir)).